Consider the following 289-residue polypeptide: D-psicose 3-epimerase (289 aa).

Residues Tyr6 and Ala107 each coordinate substrate. The active-site Proton donor/acceptor is Glu150. Glu150 contributes to the Mn(2+) binding site. Residues Glu156 and 183–186 (DTFH) contribute to the substrate site. Asp183 and His209 together coordinate Mn(2+). Residue Arg215 participates in substrate binding. The active-site Proton donor/acceptor is the Glu244. Glu244 contributes to the Mn(2+) binding site.

It belongs to the hyi family. Homotetramer. Mn(2+) serves as cofactor. The cofactor is Co(2+).

It carries out the reaction D-allulose = keto-D-fructose. Inhibited by Zn(2+) and Cu(2+). Its function is as follows. Involved in the biosynthesis of D-psicose. Catalyzes the reversible epimerization of D-fructose at the C3 position to yield D-psicose. The enzyme is highly specific for D-psicose and shows very low activity with D-tagatose. The substrate specificity decreases in the following order: D-fructose, D-tagatose, D-ribulose, D-xylulose, and D-sorbose. It shows a higher level of activity for cis ketoses than for trans-ketoses. This is D-psicose 3-epimerase (dpe) from Agrobacterium fabrum (strain C58 / ATCC 33970) (Agrobacterium tumefaciens (strain C58)).